We begin with the raw amino-acid sequence, 436 residues long: Proline transporter 3 (436 aa).

11 helical membrane passes run Ser29–Tyr49, Thr52–Ile72, Leu118–Val138, Phe151–Ala171, Leu172–Val192, Leu216–Pro236, Leu254–Trp274, Ala296–Pro316, Gly345–Met365, Ser366–Tyr386, and Val405–Leu425.

It belongs to the amino acid/polyamine transporter 2 family. Amino acid/auxin permease (AAAP) (TC 2.A.18.3) subfamily. In terms of tissue distribution, expressed in epidermal cells of leaves, sepals and petals.

The protein localises to the cell membrane. In terms of biological role, proline transporter that mediates proline and glycine betaine transport. When expressed in a heterologous system (yeast), imports L-proline, glycine betaine and GABA across the plasma membrane. The sequence is that of Proline transporter 3 (PROT3) from Arabidopsis thaliana (Mouse-ear cress).